A 431-amino-acid chain; its full sequence is PHD finger-containing protein 1 (431 aa).

The PHD-type zinc-finger motif lies at glycine 7–serine 59. 8 residues coordinate Zn(2+): cysteine 10, cysteine 13, cysteine 25, cysteine 28, histidine 34, cysteine 37, cysteine 53, and cysteine 56. The disordered stretch occupies residues glutamate 125–histidine 221. A compositionally biased stretch (polar residues) spans aspartate 128–threonine 139. Residues lysine 160–isoleucine 171 are compositionally biased toward basic residues. A compositionally biased stretch (low complexity) spans valine 191 to proline 202. Positions glutamate 205–histidine 221 are enriched in basic and acidic residues.

In terms of assembly, interacts directly with AIPP3/BDT1.

Together with AIPP3/BDT1, cooperates to form a BAH-PHD bivalent histone reader complex able to read histone H3 lysine 27 trimethylation (H3K27me3) histone marks in order to regulate transcription, especially to prevent early flowering; promotes AIPP3/BDT1 binding to H3K27me3. The protein is PHD finger-containing protein 1 of Arabidopsis thaliana (Mouse-ear cress).